Here is a 209-residue protein sequence, read N- to C-terminus: MSRNKQSASSGRWLKEHFDDKYVQEAQKRGYRSRAIFKIEEIQKKDKLLKPGMTVVDLGAAPGGWSQYAAEVVGDEGQVIACDILSMDSLPGVSFLQGDFREEAVLSALLERIQPDMVDVVLSDMAPNMSGNLASDQPRAMYLVELALEMCKQVLAPNGSFAVKVFQGEGFDQYLAEIRNMFKVVKIRKPDSSRDRSREVYIVATGYKL.

Residues G63, W65, D83, D99, and D124 each coordinate S-adenosyl-L-methionine. Catalysis depends on K164, which acts as the Proton acceptor.

Belongs to the class I-like SAM-binding methyltransferase superfamily. RNA methyltransferase RlmE family.

It is found in the cytoplasm. It catalyses the reaction uridine(2552) in 23S rRNA + S-adenosyl-L-methionine = 2'-O-methyluridine(2552) in 23S rRNA + S-adenosyl-L-homocysteine + H(+). In terms of biological role, specifically methylates the uridine in position 2552 of 23S rRNA at the 2'-O position of the ribose in the fully assembled 50S ribosomal subunit. The protein is Ribosomal RNA large subunit methyltransferase E of Photobacterium profundum (strain SS9).